The chain runs to 333 residues: MFYDDDADLTIIQGRKVGVIGYGSQGHAHSLSLRDSGVQVKVGLKEGSKSRAKVSEQGLDVDTPAAVAKWADVIMLLAPDTAQADIFKNDIEPNLSDGDALFFGHGLNIHFGLIKPPAEVTVAMVAPKGPGHLVRRQFVDGKGVPCLIAVDQDPTGKGEALALSYAKAIGGTRAGVIKTTFKDETETDLFGEQAVLCGGTEELVKAGFDVMVEAGYPPEMAYFEVLHELKLIVDLMYEGGIARMNYSVSDTAEFGGYLSGPRVIDAGTKDRMREILRDIQNGDFVKKLVANVEGGNKQLEQLRKENAEHPIEVVGKRLRDLMSWVDRPITETA.

The region spanning 1-179 (MFYDDDADLT…GGTRAGVIKT (179 aa)) is the KARI N-terminal Rossmann domain. NADP(+) is bound by residues 22–25 (YGSQ), lysine 45, serine 48, serine 50, and 80–83 (DTAQ). The active site involves histidine 105. Position 131 (glycine 131) interacts with NADP(+). The KARI C-terminal knotted domain maps to 180 to 325 (TFKDETETDL…KRLRDLMSWV (146 aa)). Residues aspartate 188, glutamate 192, glutamate 224, and glutamate 228 each coordinate Mg(2+). Position 249 (serine 249) interacts with substrate.

Belongs to the ketol-acid reductoisomerase family. The cofactor is Mg(2+).

The catalysed reaction is (2R)-2,3-dihydroxy-3-methylbutanoate + NADP(+) = (2S)-2-acetolactate + NADPH + H(+). It carries out the reaction (2R,3R)-2,3-dihydroxy-3-methylpentanoate + NADP(+) = (S)-2-ethyl-2-hydroxy-3-oxobutanoate + NADPH + H(+). The protein operates within amino-acid biosynthesis; L-isoleucine biosynthesis; L-isoleucine from 2-oxobutanoate: step 2/4. It participates in amino-acid biosynthesis; L-valine biosynthesis; L-valine from pyruvate: step 2/4. Involved in the biosynthesis of branched-chain amino acids (BCAA). Catalyzes an alkyl-migration followed by a ketol-acid reduction of (S)-2-acetolactate (S2AL) to yield (R)-2,3-dihydroxy-isovalerate. In the isomerase reaction, S2AL is rearranged via a Mg-dependent methyl migration to produce 3-hydroxy-3-methyl-2-ketobutyrate (HMKB). In the reductase reaction, this 2-ketoacid undergoes a metal-dependent reduction by NADPH to yield (R)-2,3-dihydroxy-isovalerate. The chain is Ketol-acid reductoisomerase (NADP(+)) from Mycobacterium avium (strain 104).